The primary structure comprises 556 residues: Small ribosomal subunit protein uS3m (556 aa).

Belongs to the universal ribosomal protein uS3 family. Component of the mitochondrial ribosome small subunit.

The protein localises to the mitochondrion. The polypeptide is Small ribosomal subunit protein uS3m (RPS3) (Arabidopsis thaliana (Mouse-ear cress)).